Consider the following 365-residue polypeptide: MSEEREAPGPLASSSAGLGAEVGQEEVPGGAGPARLLLLPSDSDGPPKKRLRSEAEPGSVRLEERLYSVLCCAVCLDLPKASVYQCTNGHLMCAGCFIHLLADARLKEEQATCPNCRCEISKSLCCRNLAVEKAISELPSDCGFCLKQFPRSLLERHKKEECQDRVTQCKYKRIGCPWQGPYHELTVHESECCHPTKTGNELMEILDEMDQTHKKEMQLYNSIFSLLSFEKIGYTEVQFRPYRTDDFITRLYYETPRFTVLNQTWVLKARVNDSERNPNLSCKRTLSFQLILKSKVNSPMECSFLLLKGPYDDVKIHPVIYQFVFTNENNETEYVPLPIIDSVECNKLLAAKNINLRLFIFQIQK.

The tract at residues 1–56 (MSEEREAPGPLASSSAGLGAEVGQEEVPGGAGPARLLLLPSDSDGPPKKRLRSEAE) is disordered. An RING-type; degenerate zinc finger spans residues 72-117 (CAVCLDLPKASVYQCTNGHLMCAGCFIHLLADARLKEEQATCPNCR). The segment at 113–186 (CPNCRCEISK…PWQGPYHELT (74 aa)) adopts a TRAF-type zinc-finger fold.

Belongs to the ZFTRAF1 family. As to quaternary structure, interacts with LGALS3.

The protein localises to the cytoplasm. This chain is Zinc finger TRAF-type-containing protein 1-B, found in Xenopus laevis (African clawed frog).